The primary structure comprises 146 residues: Hemoglobin subunit beta (146 aa).

Position 1 is an N-acetylvaline (Val1). Positions 2–146 constitute a Globin domain; sequence DLTAEEKAAV…VANALAHKYH (145 aa). Ser44 is modified (phosphoserine). Position 59 is an N6-acetyllysine (Lys59). His63 provides a ligand contact to heme b. The residue at position 82 (Lys82) is an N6-acetyllysine. His92 lines the heme b pocket. The residue at position 93 (Cys93) is an S-nitrosocysteine. An N6-acetyllysine modification is found at Lys144.

It belongs to the globin family. In terms of assembly, heterotetramer of two alpha chains and two beta chains. Red blood cells.

Involved in oxygen transport from the lung to the various peripheral tissues. This Rhinoceros unicornis (Greater Indian rhinoceros) protein is Hemoglobin subunit beta (HBB).